We begin with the raw amino-acid sequence, 226 residues long: uncharacterized protein (226 aa).

To L.innocua lin1255, lin1742 and lin2408.

This is an uncharacterized protein from Listeria innocua serovar 6a (strain ATCC BAA-680 / CLIP 11262).